A 305-amino-acid polypeptide reads, in one-letter code: GTPase Era (305 aa).

An Era-type G domain is found at 13–181 (RCGFVAIVGR…ESAVGRFLPE (169 aa)). Positions 21–28 (GRPNVGKS) are G1. 21–28 (GRPNVGKS) contributes to the GTP binding site. A G2 region spans residues 47-51 (QTTRH). The G3 stretch occupies residues 68–71 (DTPG). Residues 68–72 (DTPGM) and 130–133 (NKVD) contribute to the GTP site. The tract at residues 130 to 133 (NKVD) is G4. Positions 160–162 (LSA) are G5. In terms of domain architecture, KH type-2 spans 204 to 288 (VREKITRQLG…MLRLWVKVKR (85 aa)).

It belongs to the TRAFAC class TrmE-Era-EngA-EngB-Septin-like GTPase superfamily. Era GTPase family. Monomer.

The protein localises to the cytoplasm. The protein resides in the cell inner membrane. In terms of biological role, an essential GTPase that binds both GDP and GTP, with rapid nucleotide exchange. Plays a role in 16S rRNA processing and 30S ribosomal subunit biogenesis and possibly also in cell cycle regulation and energy metabolism. The sequence is that of GTPase Era from Marinobacter nauticus (strain ATCC 700491 / DSM 11845 / VT8) (Marinobacter aquaeolei).